We begin with the raw amino-acid sequence, 148 residues long: Early glycoprotein GP48 (148 aa).

An N-terminal signal peptide occupies residues 1-21 (MMLRAWRLMVLLAAYCYYVFA). N-linked (GlcNAc...) asparagine; by host glycosylation is found at asparagine 22, asparagine 44, asparagine 49, asparagine 57, asparagine 65, asparagine 104, asparagine 108, asparagine 118, asparagine 135, and asparagine 144.

This sequence belongs to the RL11 family. Post-translationally, N-glycosylated and possibly O-glycosylated.

It localises to the virion membrane. This Homo sapiens (Human) protein is Early glycoprotein GP48 (UL4).